Consider the following 152-residue polypeptide: Large ribosomal subunit protein bL9 (152 aa).

Belongs to the bacterial ribosomal protein bL9 family.

Functionally, binds to the 23S rRNA. The chain is Large ribosomal subunit protein bL9 from Chlorobaculum tepidum (strain ATCC 49652 / DSM 12025 / NBRC 103806 / TLS) (Chlorobium tepidum).